A 156-amino-acid polypeptide reads, in one-letter code: ATP synthase subunit b (156 aa).

A helical membrane pass occupies residues 7–27; the sequence is LFLQAVVFAILVWFTMKFVWP.

The protein belongs to the ATPase B chain family. F-type ATPases have 2 components, F(1) - the catalytic core - and F(0) - the membrane proton channel. F(1) has five subunits: alpha(3), beta(3), gamma(1), delta(1), epsilon(1). F(0) has three main subunits: a(1), b(2) and c(10-14). The alpha and beta chains form an alternating ring which encloses part of the gamma chain. F(1) is attached to F(0) by a central stalk formed by the gamma and epsilon chains, while a peripheral stalk is formed by the delta and b chains.

The protein localises to the cell inner membrane. F(1)F(0) ATP synthase produces ATP from ADP in the presence of a proton or sodium gradient. F-type ATPases consist of two structural domains, F(1) containing the extramembraneous catalytic core and F(0) containing the membrane proton channel, linked together by a central stalk and a peripheral stalk. During catalysis, ATP synthesis in the catalytic domain of F(1) is coupled via a rotary mechanism of the central stalk subunits to proton translocation. Its function is as follows. Component of the F(0) channel, it forms part of the peripheral stalk, linking F(1) to F(0). The sequence is that of ATP synthase subunit b from Polaromonas naphthalenivorans (strain CJ2).